The chain runs to 478 residues: Argininosuccinate lyase (478 aa).

This sequence belongs to the lyase 1 family. Argininosuccinate lyase subfamily.

The protein localises to the cytoplasm. The enzyme catalyses 2-(N(omega)-L-arginino)succinate = fumarate + L-arginine. It functions in the pathway amino-acid biosynthesis; L-arginine biosynthesis; L-arginine from L-ornithine and carbamoyl phosphate: step 3/3. In Leptospira biflexa serovar Patoc (strain Patoc 1 / Ames), this protein is Argininosuccinate lyase.